The following is a 510-amino-acid chain: UDP-N-acetylmuramoyl-tripeptide--D-alanyl-D-alanine ligase (510 aa).

Residue 136 to 142 (GSSGKTS) coordinates ATP.

This sequence belongs to the MurCDEF family. MurF subfamily.

The protein resides in the cytoplasm. The enzyme catalyses D-alanyl-D-alanine + UDP-N-acetyl-alpha-D-muramoyl-L-alanyl-gamma-D-glutamyl-meso-2,6-diaminopimelate + ATP = UDP-N-acetyl-alpha-D-muramoyl-L-alanyl-gamma-D-glutamyl-meso-2,6-diaminopimeloyl-D-alanyl-D-alanine + ADP + phosphate + H(+). The protein operates within cell wall biogenesis; peptidoglycan biosynthesis. Functionally, involved in cell wall formation. Catalyzes the final step in the synthesis of UDP-N-acetylmuramoyl-pentapeptide, the precursor of murein. In Mycobacterium tuberculosis (strain CDC 1551 / Oshkosh), this protein is UDP-N-acetylmuramoyl-tripeptide--D-alanyl-D-alanine ligase.